Reading from the N-terminus, the 246-residue chain is MVVDFWTWEQTFQELIQEAKPRATWTLKLDGNLQLDCLAQGWKQYQQRAFGWFRCSSCQRSWASAQVQILCHTYWEHWTSQGQVRMRLFGQRCQKCSWSQYEMPEFSSDSTMRILSNLVQHILKKYYGNGTRKSPEMPVILEVSLEGSHDTANCEACTLGICGQGLKSCMTKPSKSLLPHLKTGNSSPGIGAVYLANQAKNQSAEAKEAKGSGYEKLGPSRDPDPLNICVFILLLVFIVVKCFTSE.

Residues 1–224 (MVVDFWTWEQ…EKLGPSRDPD (224 aa)) lie on the Cytoplasmic side of the membrane. The 3CxxC-type zinc-finger motif lies at 48–159 (RAFGWFRCSS…DTANCEACTL (112 aa)). A helical transmembrane segment spans residues 225–245 (PLNICVFILLLVFIVVKCFTS).

This sequence belongs to the TMEM7 family. Interacts with TASR16. Interacts with OPRD1 and OPRM1; the interaction promotes cell surface localization of the OPDR1-OPRM1 heterodimer. As to quaternary structure, (Microbial infection) Interacts with influenza A virus protein NS1; this interaction sequesters NS1 from interacting with RIG-I/DDX58 to restore antiviral signaling. As to expression, expressed in circumvallate papillae and testis.

The protein localises to the membrane. Its subcellular location is the cytoplasm. In terms of biological role, chaperone protein that facilitates the trafficking and functional cell surface expression of some G-protein coupled receptors (GPCRs). Promotes functional expression of the bitter taste receptor TAS2R16. Also promotes functional expression of the opioid receptor heterodimer OPRD1-OPRM1. In addition, acts as a potent IFN-inducible suppressor of pathogens including lyssavirus rabies, influenza A or yellow fever virus. Mechanistically, associates with the viral replicase, binds viral RNA, and thereby suppresses viral genome amplification that replicates at the endoplasmic reticulum. In addition, restores antiviral signaling by interacting with and sequestering influenza A virus protein NS1. This Homo sapiens (Human) protein is Receptor-transporting protein 4 (RTP4).